The chain runs to 257 residues: Ribonuclease PH (257 aa).

Residues Arg86 and 124–126 (GTR) each bind phosphate.

Belongs to the RNase PH family. Homohexameric ring arranged as a trimer of dimers.

It catalyses the reaction tRNA(n+1) + phosphate = tRNA(n) + a ribonucleoside 5'-diphosphate. Functionally, phosphorolytic 3'-5' exoribonuclease that plays an important role in tRNA 3'-end maturation. Removes nucleotide residues following the 3'-CCA terminus of tRNAs; can also add nucleotides to the ends of RNA molecules by using nucleoside diphosphates as substrates, but this may not be physiologically important. Probably plays a role in initiation of 16S rRNA degradation (leading to ribosome degradation) during starvation. The protein is Ribonuclease PH of Halalkalibacterium halodurans (strain ATCC BAA-125 / DSM 18197 / FERM 7344 / JCM 9153 / C-125) (Bacillus halodurans).